Here is a 262-residue protein sequence, read N- to C-terminus: tRNA pseudouridine synthase A (262 aa).

The active-site Nucleophile is Asp52. Tyr103 lines the substrate pocket.

The protein belongs to the tRNA pseudouridine synthase TruA family.

It carries out the reaction uridine(38/39/40) in tRNA = pseudouridine(38/39/40) in tRNA. Its function is as follows. Formation of pseudouridine at positions 38, 39 and 40 in the anticodon stem and loop of transfer RNAs. The chain is tRNA pseudouridine synthase A from Methanococcus maripaludis (strain DSM 14266 / JCM 13030 / NBRC 101832 / S2 / LL).